We begin with the raw amino-acid sequence, 236 residues long: 2,3,4,5-tetrahydropyridine-2,6-dicarboxylate N-acetyltransferase (236 aa).

This sequence belongs to the transferase hexapeptide repeat family. DapH subfamily.

It catalyses the reaction (S)-2,3,4,5-tetrahydrodipicolinate + acetyl-CoA + H2O = L-2-acetamido-6-oxoheptanedioate + CoA. Its pathway is amino-acid biosynthesis; L-lysine biosynthesis via DAP pathway; LL-2,6-diaminopimelate from (S)-tetrahydrodipicolinate (acetylase route): step 1/3. In terms of biological role, catalyzes the transfer of an acetyl group from acetyl-CoA to tetrahydrodipicolinate. The protein is 2,3,4,5-tetrahydropyridine-2,6-dicarboxylate N-acetyltransferase of Clostridium beijerinckii (strain ATCC 51743 / NCIMB 8052) (Clostridium acetobutylicum).